Consider the following 336-residue polypeptide: Lipoyl synthase (336 aa).

The [4Fe-4S] cluster site is built by Cys-81, Cys-86, Cys-92, Cys-107, Cys-111, Cys-114, and Ser-323. Positions 93–312 (FGHGTATFMI…EDYGYELGFS (220 aa)) constitute a Radical SAM core domain.

The protein belongs to the radical SAM superfamily. Lipoyl synthase family. It depends on [4Fe-4S] cluster as a cofactor.

Its subcellular location is the cytoplasm. It catalyses the reaction [[Fe-S] cluster scaffold protein carrying a second [4Fe-4S](2+) cluster] + N(6)-octanoyl-L-lysyl-[protein] + 2 oxidized [2Fe-2S]-[ferredoxin] + 2 S-adenosyl-L-methionine + 4 H(+) = [[Fe-S] cluster scaffold protein] + N(6)-[(R)-dihydrolipoyl]-L-lysyl-[protein] + 4 Fe(3+) + 2 hydrogen sulfide + 2 5'-deoxyadenosine + 2 L-methionine + 2 reduced [2Fe-2S]-[ferredoxin]. It functions in the pathway protein modification; protein lipoylation via endogenous pathway; protein N(6)-(lipoyl)lysine from octanoyl-[acyl-carrier-protein]: step 2/2. In terms of biological role, catalyzes the radical-mediated insertion of two sulfur atoms into the C-6 and C-8 positions of the octanoyl moiety bound to the lipoyl domains of lipoate-dependent enzymes, thereby converting the octanoylated domains into lipoylated derivatives. The polypeptide is Lipoyl synthase (Stenotrophomonas maltophilia (strain R551-3)).